Reading from the N-terminus, the 190-residue chain is Ribose 1,5-bisphosphate phosphokinase PhnN (190 aa).

Gly-19 to Asp-26 contributes to the ATP binding site.

This sequence belongs to the ribose 1,5-bisphosphokinase family.

The catalysed reaction is alpha-D-ribose 1,5-bisphosphate + ATP = 5-phospho-alpha-D-ribose 1-diphosphate + ADP. Its pathway is metabolic intermediate biosynthesis; 5-phospho-alpha-D-ribose 1-diphosphate biosynthesis; 5-phospho-alpha-D-ribose 1-diphosphate from D-ribose 5-phosphate (route II): step 3/3. Its function is as follows. Catalyzes the phosphorylation of ribose 1,5-bisphosphate to 5-phospho-D-ribosyl alpha-1-diphosphate (PRPP). The chain is Ribose 1,5-bisphosphate phosphokinase PhnN from Ruegeria sp. (strain TM1040) (Silicibacter sp.).